A 363-amino-acid polypeptide reads, in one-letter code: Protein-arginine kinase (363 aa).

One can recognise a Phosphagen kinase C-terminal domain in the interval 24–255 (IVLSSRIRLA…EQLIAQERAA (232 aa)). Residues 27-31 (SSRIR), H92, R126, 177-181 (RASVM), and 208-213 (RGTYGE) contribute to the ATP site. Residues 338 to 343 (RDVRRA) carry the RDXXRA motif of the pArg binding pocket involved in allosteric regulation motif.

This sequence belongs to the ATP:guanido phosphotransferase family. In terms of assembly, homodimer. Dimerization is important for full catalytic activity.

The enzyme catalyses L-arginyl-[protein] + ATP = N(omega)-phospho-L-arginyl-[protein] + ADP + H(+). With respect to regulation, appears to be allosterically activated by the binding of pArg-containing polypeptides to the pArg-binding pocket localized in the C-terminal domain of McsB. Functionally, catalyzes the specific phosphorylation of arginine residues in a large number of proteins. Is part of the bacterial stress response system, where it is involved in regulating the global heat shock repressor CtsR; phosphorylates arginine residues in the winged helix-turn-helix domain of CtsR, thereby preventing its binding to DNA and consequently inducing the expression of repressed genes. Protein arginine phosphorylation has a physiologically important role and is involved in the regulation of many critical cellular processes, such as protein homeostasis, motility, competence, and stringent and stress responses, by regulating gene expression and protein activity. Acts exclusively on Arg residues, since it cannot phosphorylate Tyr, Ser, Thr, His, Asp and Lys. Has no free arginine kinase activity. In Geobacillus stearothermophilus (Bacillus stearothermophilus), this protein is Protein-arginine kinase.